The primary structure comprises 325 residues: uncharacterized protein (325 aa).

Residues 1–75 (MSQPPEHPGN…PPPGYPTHLQ (75 aa)) are disordered. Pro residues-rich tracts occupy residues 24–39 (YPPPGYGAPPPPPGYG) and 50–70 (YNAPPPPPGYGPPPGPPPPGY). 4 helical membrane-spanning segments follow: residues 96 to 116 (AVTLVVPVLAYAVALAAVIGA), 153 to 173 (IVMFLGYIALFALVLYMHAGI), 205 to 225 (LLIVALTFIGGLLCVIPGLIF), and 273 to 293 (LVGELLCFVGMLIGIPVAALI).

It localises to the cell membrane. This is an uncharacterized protein from Mycobacterium tuberculosis (strain CDC 1551 / Oshkosh).